The primary structure comprises 140 residues: L-fucose mutarotase (140 aa).

Catalysis depends on H22, which acts as the Proton donor. Substrate is bound by residues D30, R107, and 129 to 131 (YGN).

The protein belongs to the RbsD / FucU family. FucU mutarotase subfamily. As to quaternary structure, homodecamer.

The protein resides in the cytoplasm. It carries out the reaction alpha-L-fucose = beta-L-fucose. It participates in carbohydrate metabolism; L-fucose metabolism. Functionally, involved in the anomeric conversion of L-fucose. This Salmonella arizonae (strain ATCC BAA-731 / CDC346-86 / RSK2980) protein is L-fucose mutarotase.